The following is a 288-amino-acid chain: MNGCCSQDPTSKRLEGKVAVITGGASGIGACTVKLFVKHGAKVVIADVQDELGHSLCKEIGSEDVVTYVHCDVSSDSDVKNVVDSAVSKYGKLDIMFSNAGVSGGLDPRILATENDEFKKVFEVNVFGGFLAAKHAARVMIPEKKGCILFTSSNSAAIAIPGPHSYVVSKHALNGLMKNLSAELGQHGIRVNCVSPFGVVTPMMATAFGMKDADPEVVKATIEGLLASAANLKEVTLGAEDIANAALYLASDEAKYVSGLNLVVDGGYSVTNPSFTATLQKAFAVAHV.

NAD(+) is bound by residues 26–28, aspartate 47, 72–73, and 99–101; these read SGI, DV, and NAG. The active-site Proton donor is serine 153. Residues serine 153 and tyrosine 166 each contribute to the substrate site. NAD(+) is bound by residues tyrosine 166, lysine 170, and threonine 201. Residue tyrosine 166 is the Proton acceptor of the active site. The active-site Proton donor/acceptor is lysine 170.

It belongs to the short-chain dehydrogenases/reductases (SDR) family. Homodimer. In terms of tissue distribution, expressed in mature seeds.

It carries out the reaction 4,5,8-trihydroxycasbene + 2 NAD(+) = jolkinol C + 2 NADH + 2 H(+). The enzyme catalyses a secondary alcohol + NAD(+) = a ketone + NADH + H(+). It catalyses the reaction a primary alcohol + NAD(+) = an aldehyde + NADH + H(+). The protein operates within secondary metabolite biosynthesis; terpenoid biosynthesis. Functionally, involved in the biosynthesis of macrocyclic lathyrane type diterpenoids (also called Euphorbia factors) natural products, including the cyclization route from casbene to jolkinol C, a precursor for ingenol mebutate that is used to treat actinic keratosis, a precancerous skin condition. Catalyzes the conversion of 4,5,8-trihydroxycasbene into jolkinol C in presence of NAD. Also mediates the formation of casbene dione derivative and 4-ketocasbene from 4-hydroxy-8-ketocasbene and 4-hydroxycasbene, respectively. Together with CYP71D445, triggers the biosynthesis of 8-ketocasbene from 8-hydroxycasbene. The sequence is that of Short chain aldehyde dehydrogenase 1 from Euphorbia lathyris (Caper spurge).